The following is a 24-amino-acid chain: Cupiennin-5a (24 aa).

Expressed by the venom gland.

The protein resides in the secreted. This Cupiennius salei (American wandering spider) protein is Cupiennin-5a.